The sequence spans 401 residues: UPF0242 protein CPn_0755/CP_1117/CPj0755/CpB0783 (401 aa).

This sequence belongs to the UPF0242 family.

The sequence is that of UPF0242 protein CPn_0755/CP_1117/CPj0755/CpB0783 from Chlamydia pneumoniae (Chlamydophila pneumoniae).